A 266-amino-acid polypeptide reads, in one-letter code: Small ribosomal subunit protein uS2 (266 aa).

Positions 227–266 (GVSFTEETPSEPIQSDSSEEEEGSLDISDLFEDTDLKEEE) are disordered. The span at 231–240 (TEETPSEPIQ) shows a compositional bias: polar residues. Acidic residues predominate over residues 243-266 (SSEEEEGSLDISDLFEDTDLKEEE).

The protein belongs to the universal ribosomal protein uS2 family.

The protein is Small ribosomal subunit protein uS2 of Pseudothermotoga lettingae (strain ATCC BAA-301 / DSM 14385 / NBRC 107922 / TMO) (Thermotoga lettingae).